The primary structure comprises 241 residues: 1-(5-phosphoribosyl)-5-[(5-phosphoribosylamino)methylideneamino] imidazole-4-carboxamide isomerase (241 aa).

Aspartate 10 serves as the catalytic Proton acceptor. Aspartate 131 serves as the catalytic Proton donor.

This sequence belongs to the HisA/HisF family.

The protein resides in the cytoplasm. The enzyme catalyses 1-(5-phospho-beta-D-ribosyl)-5-[(5-phospho-beta-D-ribosylamino)methylideneamino]imidazole-4-carboxamide = 5-[(5-phospho-1-deoxy-D-ribulos-1-ylimino)methylamino]-1-(5-phospho-beta-D-ribosyl)imidazole-4-carboxamide. It functions in the pathway amino-acid biosynthesis; L-histidine biosynthesis; L-histidine from 5-phospho-alpha-D-ribose 1-diphosphate: step 4/9. This is 1-(5-phosphoribosyl)-5-[(5-phosphoribosylamino)methylideneamino] imidazole-4-carboxamide isomerase from Bifidobacterium longum (strain DJO10A).